The following is a 343-amino-acid chain: Probable F-box protein At1g67455 (343 aa).

One can recognise an F-box domain in the interval 1–46 (MMISDLPEDMVEEILSRVSIISLGALRWNDLSKARVICKAEARQQF).

This is Probable F-box protein At1g67455 from Arabidopsis thaliana (Mouse-ear cress).